Consider the following 465-residue polypeptide: Argininosuccinate lyase (465 aa).

It belongs to the lyase 1 family. Argininosuccinate lyase subfamily.

It is found in the cytoplasm. The enzyme catalyses 2-(N(omega)-L-arginino)succinate = fumarate + L-arginine. It functions in the pathway amino-acid biosynthesis; L-arginine biosynthesis; L-arginine from L-ornithine and carbamoyl phosphate: step 3/3. The chain is Argininosuccinate lyase from Variovorax paradoxus (strain S110).